The following is a 129-amino-acid chain: Small ribosomal subunit protein uS11 (129 aa).

The protein belongs to the universal ribosomal protein uS11 family. As to quaternary structure, part of the 30S ribosomal subunit. Interacts with proteins S7 and S18. Binds to IF-3.

Functionally, located on the platform of the 30S subunit, it bridges several disparate RNA helices of the 16S rRNA. Forms part of the Shine-Dalgarno cleft in the 70S ribosome. The polypeptide is Small ribosomal subunit protein uS11 (Synechococcus sp. (strain RCC307)).